The chain runs to 38 residues: Large ribosomal subunit protein bL36 (38 aa).

The protein belongs to the bacterial ribosomal protein bL36 family.

The sequence is that of Large ribosomal subunit protein bL36 from Chloroherpeton thalassium (strain ATCC 35110 / GB-78).